The primary structure comprises 154 residues: MFKKMDKKAAQRIAMEYRAMISKESLFSIGQNSNNIYEWTAVIRGPDGTPYEGGMFNLSIKFPTDYPFKPPKFTFKTPIYHPNINDEGSICMNILKDKWTPALMVEKVLLSILLLLEKPNPDDPLVPEIGQLFKNNRFQFDQRAREFTARHANN.

One can recognise a UBC core domain in the interval 8–153 (KAAQRIAMEY…AREFTARHAN (146 aa)). The active-site Glycyl thioester intermediate is Cys-91.

It belongs to the ubiquitin-conjugating enzyme family.

The enzyme catalyses S-ubiquitinyl-[E1 ubiquitin-activating enzyme]-L-cysteine + [E2 ubiquitin-conjugating enzyme]-L-cysteine = [E1 ubiquitin-activating enzyme]-L-cysteine + S-ubiquitinyl-[E2 ubiquitin-conjugating enzyme]-L-cysteine.. The protein operates within protein modification; protein ubiquitination. Functionally, accepts the ubiquitin from the E1 complex and catalyzes its covalent attachment to other proteins. In Arabidopsis thaliana (Mouse-ear cress), this protein is Probable ubiquitin-conjugating enzyme E2 31 (UBC31).